A 109-amino-acid chain; its full sequence is Ribonuclease P protein component 2 (109 aa).

Belongs to the eukaryotic/archaeal RNase P protein component 2 family. As to quaternary structure, consists of a catalytic RNA component and at least 4-5 protein subunits.

It is found in the cytoplasm. The catalysed reaction is Endonucleolytic cleavage of RNA, removing 5'-extranucleotides from tRNA precursor.. In terms of biological role, part of ribonuclease P, a protein complex that generates mature tRNA molecules by cleaving their 5'-ends. This is Ribonuclease P protein component 2 from Archaeoglobus fulgidus (strain ATCC 49558 / DSM 4304 / JCM 9628 / NBRC 100126 / VC-16).